The following is a 235-amino-acid chain: Transcription factor hepR (235 aa).

Residues 14–45 are disordered; that stretch reads QNSPESSRDVLSMASPGLLPIDPSPEHDETNK. Residues 175–205 form a C2H2-type zinc finger; that stretch reads IQCPCLDERGERCSRMFSRLDNMRDHVRRIH.

The protein localises to the nucleus. Functionally, transcription factor; part of the gene cluster that mediates the biosynthesis of heptelidic acid (HA), a sesquiterpene lactone that acts as an inhibitor of glyceraldehyde-3-phosphatedehydrogenase (GAPDH) and a growth inhibitor of the salt-tolerant lactic acid bacteria in soy sauce brewing. Both hepR and hepS regulate the transcription of the heptelidic acid cluster, but they are not involved in mutual transcriptional regulation and act with different mechanisms. This chain is Transcription factor hepR, found in Aspergillus oryzae (strain ATCC 42149 / RIB 40) (Yellow koji mold).